The chain runs to 343 residues: Mas-related G-protein coupled receptor member F (343 aa).

The Extracellular segment spans residues 1-44; that stretch reads MAGNCSWEAHSTNQNKMCPGMSEARELYSRGFLTIEQIATLPPP. N-linked (GlcNAc...) asparagine glycosylation is present at N4. Residues 45 to 66 form a helical membrane-spanning segment; it reads AVTNYIFLLLCLCGLVGNGLVL. The Cytoplasmic segment spans residues 67–82; sequence WFFGFSIKRTPFSIYF. The chain crosses the membrane as a helical span at residues 83 to 104; sequence LHLASADGMYLFSKAVIALLNM. The Extracellular segment spans residues 105–123; it reads GTFLGSFPDYIRRVSRIVG. A helical transmembrane segment spans residues 124 to 144; it reads LCTFFTGVSLLPAISIERCVS. Residues 145–160 are Cytoplasmic-facing; that stretch reads VIFPTWYWRRRPKRLS. Residues 161 to 181 traverse the membrane as a helical segment; it reads AGVCALLWMLSFLVTSIHNYF. Topologically, residues 182–198 are extracellular; the sequence is CMFLGHEAPGTVCRNMD. The helical transmembrane segment at 199 to 220 threads the bilayer; it reads IALGILLFFLFCPLMVLPCLAL. The Cytoplasmic portion of the chain corresponds to 221–241; it reads ILHVECRARRRQRSAKLNHVV. Residues 242–263 traverse the membrane as a helical segment; sequence LAIVSVFLVSSIYLGIDWFLFW. Residues 264-273 are Extracellular-facing; the sequence is VFQIPAPFPE. The chain crosses the membrane as a helical span at residues 274 to 294; it reads YVTDLCICINSSAKPIVYFLA. At 295-343 the chain is on the cytoplasmic side; sequence GRDKSQRLWEPLRVVFQRALRDGAEPGDAASSTPNTVTMEMQCPSGNAS. Residues 318–343 form a disordered region; the sequence is AEPGDAASSTPNTVTMEMQCPSGNAS. Over residues 324-343 the composition is skewed to polar residues; the sequence is ASSTPNTVTMEMQCPSGNAS.

This sequence belongs to the G-protein coupled receptor 1 family. Mas subfamily.

It is found in the cell membrane. Its function is as follows. Orphan receptor. May bind to a neuropeptide and may regulate nociceptor function and/or development, including the sensation or modulation of pain. The protein is Mas-related G-protein coupled receptor member F (Mrgprf) of Mus musculus (Mouse).